The sequence spans 461 residues: Regulatory protein AtoC (461 aa).

The 115-residue stretch at 6-120 (RILIVDDEDN…ELNLIVQRAL (115 aa)) folds into the Response regulatory domain. Position 55 is a 4-aspartylphosphate (D55). The residue at position 73 (H73) is a Phosphohistidine. A Sigma-54 factor interaction domain is found at 145–374 (ILTNSPAMMD…LSNVIERAVV (230 aa)). Residues 173 to 180 (GESGTGKE) and 236 to 245 (ANEGTLLLDE) contribute to the ATP site. A DNA-binding region (H-T-H motif) is located at residues 433-452 (RTRTALMLGISRRALMYKLQ).

In terms of processing, phosphorylated by AtoS. Contains two phosphorylation sites, which are both involved in the transduction of the acetoacetate signal. Asp-55 is probably the primary phosphorylation site, but either both residues can be phosphorylated independently by AtoS or the phosphate group can be transferred between them. The N-terminus is blocked.

The protein localises to the cytoplasm. Its function is as follows. Member of the two-component regulatory system AtoS/AtoC. In the presence of acetoacetate, AtoS/AtoC stimulates the expression of the atoDAEB operon, leading to short chain fatty acid catabolism and activation of the poly-(R)-3-hydroxybutyrate (cPHB) biosynthetic pathway. Also induces the operon in response to spermidine. Involved in the regulation of motility and chemotaxis, via transcriptional induction of the flagellar regulon. AtoC acts by binding directly to the promoter region of the target genes. In addition to its role as a transcriptional regulator, functions as a post-translational regulator that inhibits polyamine biosynthesis via regulation of ornithine decarboxylase (ODC). The sequence is that of Regulatory protein AtoC (atoC) from Escherichia coli (strain K12).